The chain runs to 376 residues: Flagellar P-ring protein (376 aa).

An N-terminal signal peptide occupies residues 1-29 (MTQRPFSLLSHLGRICLAAAMLAALPAQA).

The protein belongs to the FlgI family. As to quaternary structure, the basal body constitutes a major portion of the flagellar organelle and consists of four rings (L,P,S, and M) mounted on a central rod.

Its subcellular location is the periplasm. It localises to the bacterial flagellum basal body. Assembles around the rod to form the L-ring and probably protects the motor/basal body from shearing forces during rotation. This Bordetella avium (strain 197N) protein is Flagellar P-ring protein.